Reading from the N-terminus, the 714-residue chain is Sodium-dependent acetylcholine transporter (714 aa).

A disordered region spans residues 1-21; that stretch reads MSVSSNDPEQRNGRGMASGNN. At 1–74 the chain is on the cytoplasmic side; the sequence is MSVSSNDPEQ…GNWSNKSDYL (74 aa). The next 3 membrane-spanning stretches (helical) occupy residues 75–95, 100–120, and 152–172; these read LAVI…FLVF, AAFL…MFFM, and ISGF…FYLI. The Extracellular segment spans residues 173 to 257; it reads NSFSFSIPWS…LSKGVDDFGT (85 aa). N-linked (GlcNAc...) asparagine glycans are attached at residues asparagine 192, asparagine 205, asparagine 211, and asparagine 222. Transmembrane regions (helical) follow at residues 258-278, 287-307, 336-356, 368-388, 422-442, 476-496, 502-522, 548-568, and 584-604; these read LNWY…LCLF, VVYV…TRLL, AAVQ…TIAS, IWLV…LTFS, AGVS…LLVV, VCAL…LFWM, FVLT…INWV, ILFK…LWLD, and ILTA…VGIW. Over 605-714 the chain is Cytoplasmic; that stretch reads QFCIAKGTIT…IPKFERETAI (110 aa).

It belongs to the sodium:neurotransmitter symporter (SNF) (TC 2.A.22) family. Interacts with stn-1; part of the DGC. Body wall, and vulval and enteric muscles.

Its subcellular location is the cell membrane. It is found in the postsynaptic cell membrane. Mediates sodium-dependent uptake of acetylcholine at neuromuscular junctions during periods of increased synaptic activity, may also prevent spillover to adjacent synaptic sites. Not involved in the uptake of other neurotransmitters (GABA, glycine, proline and glutamate) and there was also no inhibition of uptake by adding an excess of other candidate substrates (GABA, glycine, taurine, creatine, proline, alanine, carnitine, glutamate and betaine). Required for muscle integrity; altered transport of acetylcholine due to loss of dystrophin-glycoprotein complex (DGC) function results in muscle degeneration. The protein is Sodium-dependent acetylcholine transporter of Caenorhabditis elegans.